We begin with the raw amino-acid sequence, 256 residues long: Undecaprenyl-diphosphatase (256 aa).

7 helical membrane-spanning segments follow: residues 1 to 21 (MDIF…FLPV), 41 to 61 (FHKT…LALF), 69 to 89 (VDIW…GFLL), 96 to 116 (LFAP…FLVL), 172 to 192 (VAAE…TGYD), 207 to 227 (ALGV…KGFL), and 233 to 253 (FNFV…LFYL).

This sequence belongs to the UppP family.

The protein resides in the cell inner membrane. The catalysed reaction is di-trans,octa-cis-undecaprenyl diphosphate + H2O = di-trans,octa-cis-undecaprenyl phosphate + phosphate + H(+). In terms of biological role, catalyzes the dephosphorylation of undecaprenyl diphosphate (UPP). Confers resistance to bacitracin. This Wolinella succinogenes (strain ATCC 29543 / DSM 1740 / CCUG 13145 / JCM 31913 / LMG 7466 / NCTC 11488 / FDC 602W) (Vibrio succinogenes) protein is Undecaprenyl-diphosphatase.